The chain runs to 257 residues: Thiazole synthase (257 aa).

Catalysis depends on Lys100, which acts as the Schiff-base intermediate with DXP. Residues Gly161, 187 to 188 (AG), and 209 to 210 (NT) each bind 1-deoxy-D-xylulose 5-phosphate.

Belongs to the ThiG family. Homotetramer. Forms heterodimers with either ThiH or ThiS.

Its subcellular location is the cytoplasm. It catalyses the reaction [ThiS sulfur-carrier protein]-C-terminal-Gly-aminoethanethioate + 2-iminoacetate + 1-deoxy-D-xylulose 5-phosphate = [ThiS sulfur-carrier protein]-C-terminal Gly-Gly + 2-[(2R,5Z)-2-carboxy-4-methylthiazol-5(2H)-ylidene]ethyl phosphate + 2 H2O + H(+). It participates in cofactor biosynthesis; thiamine diphosphate biosynthesis. Its function is as follows. Catalyzes the rearrangement of 1-deoxy-D-xylulose 5-phosphate (DXP) to produce the thiazole phosphate moiety of thiamine. Sulfur is provided by the thiocarboxylate moiety of the carrier protein ThiS. In vitro, sulfur can be provided by H(2)S. This Pelagibacter ubique (strain HTCC1062) protein is Thiazole synthase.